The sequence spans 792 residues: E3 UFM1-protein ligase 1 (792 aa).

The residue at position 2 (A2) is an N-acetylalanine. The tract at residues 2–200 (ADAWEEIRRL…RGLFSAITRP (199 aa)) is mediates interaction with DDRGK1. Positions 2 to 212 (ADAWEEIRRL…VNSLISRYGF (211 aa)) are required for E3 UFM1-protein ligase activity. The interval 121–250 (DRLAEEVNDK…KAVFIPDIYS (130 aa)) is involved in CDK5RAP3-binding. The segment at 200-400 (PTAVNSLISR…NPVHLITEED (201 aa)) is mediates interaction with TRIP4. Residues 412–471 (TSKKDKKDERRRKATEGSGSVRGGGGSNAREYKIKKTKKKGRKDDDSDDESSHTGKKKPE) form a disordered region. R433 is subject to Omega-N-methylarginine. The segment covering 453 to 471 (RKDDDSDDESSHTGKKKPE) has biased composition (basic and acidic residues). S458 carries the post-translational modification Phosphoserine. The interval 488–682 (LQDAPEEFIS…QLKVTEDPAL (195 aa)) is mediates interaction with CDK5RAP3. At T534 the chain carries Phosphothreonine. S752 is subject to Phosphoserine.

It belongs to the UFL1 family. Catalytic component of the UFM1 ribosome E3 ligase (UREL) complex, composed of UFL1, DDRGK1 and CDK5RAP3. Interacts with E2-like enzyme UFC1. Interacts with RELA. Interacts with NBN; promoting recruitment to double-strand breaks following DNA damage. Interacts (when phosphorylated) with YWHAG/14-3-3-gamma; sequestering UFL1 and preventing its association with PDCD1/PD-1 substrate. Post-translationally, ubiquitinated, leading to its degradation by the proteasome. Interaction with CDK5RAP3 protects both proteins against ubiquitination and degradation via the proteasome. In terms of processing, phosphorylation at Thr-534 by AMPK promotes its interaction with YWHAG/14-3-3-gamma, thereby preventing UFL1 association with PDCD1/PD-1 substrate.

The protein resides in the endoplasmic reticulum membrane. It localises to the cytoplasm. It is found in the cytosol. Its subcellular location is the nucleus. The protein localises to the chromosome. In terms of biological role, E3 protein ligase that mediates ufmylation, the covalent attachment of the ubiquitin-like modifier UFM1 to lysine residues on target proteins, and which plays a key role in various processes, such as ribosome recycling, response to DNA damage, interferon response or reticulophagy (also called ER-phagy). Catalyzes ufmylation of many protein, such as CD274/PD-L1, CDK5RAP3, CYB5R3, DDRGK1, EIF6, histone H4, MRE11, P4HB, PDCD1/PD-1, TRIP4, RPN1, RPS20/uS10, RPL10/uL16, RPL26/uL24, SYVN1/HRD1 and TP53/p53. As part of the UREL complex, plays a key role in ribosome recycling by catalyzing mono-ufmylation of RPL26/uL24 subunit of the 60S ribosome. Ufmylation of RPL26/uL24 occurs on free 60S ribosomes following ribosome dissociation: it weakens the junction between post-termination 60S subunits and SEC61 translocons, promoting release and recycling of the large ribosomal subunit from the endoplasmic reticulum membrane. Ufmylation of RPL26/uL24 and subsequent 60S ribosome recycling either take place after normal termination of translation or after ribosome stalling during cotranslational translocation at the endoplasmic reticulum. Involved in reticulophagy in response to endoplasmic reticulum stress by mediating ufmylation of proteins such as CYB5R3 and RPN1, thereby promoting lysosomal degradation of ufmylated proteins. Ufmylation in response to endoplasmic reticulum stress is essential for processes such as hematopoiesis, blood vessel morphogenesis or inflammatory response. Regulates inflammation in response to endoplasmic reticulum stress by promoting reticulophagy, leading to inhibit the activity of the NF-kappa-B transcription factor. Mediates ufmylation of DDRGK1 and CDK5RAP3; the role of these modifications is however unclear: as both DDRGK1 and CDK5RAP3 act as substrate adapters for ufmylation, it is uncertain whether ufmylation of these proteins is, a collateral effect or is required for ufmylation. Acts as a negative regulator of T-cell activation by mediating ufmylation and stabilization of PDCD1/PD-1. Also involved in the response to DNA damage: recruited to double-strand break sites following DNA damage and mediates monoufmylation of histone H4 and ufmylation of MRE11. Mediates ufmylation of TP53/p53, promoting its stability. Catalyzes ufmylation of TRIP4, thereby playing a role in nuclear receptor-mediated transcription. Required for hematopoietic stem cell function and hematopoiesis. This chain is E3 UFM1-protein ligase 1, found in Bos taurus (Bovine).